Consider the following 139-residue polypeptide: Small ribosomal subunit protein uS12 (139 aa).

The tract at residues 1 to 44 (MPTINQLVKKPRTSKVKKSTAPALNKGYNSHKKKATDLASPQKR) is disordered. Positions 9–18 (KKPRTSKVKK) are enriched in basic residues. D102 is subject to 3-methylthioaspartic acid.

Belongs to the universal ribosomal protein uS12 family. Part of the 30S ribosomal subunit. Contacts proteins S8 and S17. May interact with IF1 in the 30S initiation complex.

In terms of biological role, with S4 and S5 plays an important role in translational accuracy. Interacts with and stabilizes bases of the 16S rRNA that are involved in tRNA selection in the A site and with the mRNA backbone. Located at the interface of the 30S and 50S subunits, it traverses the body of the 30S subunit contacting proteins on the other side and probably holding the rRNA structure together. The combined cluster of proteins S8, S12 and S17 appears to hold together the shoulder and platform of the 30S subunit. This is Small ribosomal subunit protein uS12 from Macrococcus caseolyticus (strain JCSC5402) (Macrococcoides caseolyticum).